The following is a 261-amino-acid chain: tRNA pseudouridine synthase A (261 aa).

The Nucleophile role is filled by aspartate 53. A substrate-binding site is contributed by tyrosine 111.

Belongs to the tRNA pseudouridine synthase TruA family. Homodimer.

The catalysed reaction is uridine(38/39/40) in tRNA = pseudouridine(38/39/40) in tRNA. Formation of pseudouridine at positions 38, 39 and 40 in the anticodon stem and loop of transfer RNAs. The protein is tRNA pseudouridine synthase A of Shouchella clausii (strain KSM-K16) (Alkalihalobacillus clausii).